The primary structure comprises 525 residues: 2-isopropylmalate synthase (525 aa).

The region spanning 12-274 is the Pyruvate carboxyltransferase domain; it reads VVIFDTTLRD…WNKIDTTQLT (263 aa). Asp-21, His-209, His-211, and Asn-245 together coordinate Mn(2+). The regulatory domain stretch occupies residues 398–525; the sequence is KLLSLSVIAG…GHGASAAAAS (128 aa).

This sequence belongs to the alpha-IPM synthase/homocitrate synthase family. LeuA type 1 subfamily. Homodimer. Requires Mn(2+) as cofactor.

The protein resides in the cytoplasm. The enzyme catalyses 3-methyl-2-oxobutanoate + acetyl-CoA + H2O = (2S)-2-isopropylmalate + CoA + H(+). It functions in the pathway amino-acid biosynthesis; L-leucine biosynthesis; L-leucine from 3-methyl-2-oxobutanoate: step 1/4. Its function is as follows. Catalyzes the condensation of the acetyl group of acetyl-CoA with 3-methyl-2-oxobutanoate (2-ketoisovalerate) to form 3-carboxy-3-hydroxy-4-methylpentanoate (2-isopropylmalate). The sequence is that of 2-isopropylmalate synthase from Bradyrhizobium sp. (strain ORS 278).